We begin with the raw amino-acid sequence, 136 residues long: Histone H3.2 (136 aa).

Positions 1 to 43 (MARTKQTARKSTGGKAPRKQLATKAARKSAPATGGVKKPHRFR) are disordered. 2 positions are modified to N6,N6,N6-trimethyllysine; alternate: Lys5 and Lys10. N6,N6-dimethyllysine; alternate occurs at positions 5 and 10. Residues Lys5 and Lys10 each carry the N6-methyllysine; alternate modification. Lys10 carries the N6-acetyllysine; alternate modification. Ser11 is subject to Phosphoserine. At Thr12 the chain carries Phosphothreonine. At Lys15 the chain carries N6-acetyllysine. N6-methyllysine; alternate occurs at positions 19, 24, and 28. N6-acetyllysine; alternate is present on residues Lys19 and Lys24. The residue at position 28 (Lys28) is an N6,N6,N6-trimethyllysine; alternate. N6,N6-dimethyllysine; alternate is present on Lys28. Ser29 carries the post-translational modification Phosphoserine. At Lys37 the chain carries N6,N6,N6-trimethyllysine; alternate. N6,N6-dimethyllysine; alternate is present on Lys37. Lys37 carries the post-translational modification N6-methyllysine; alternate.

Belongs to the histone H3 family. As to quaternary structure, the nucleosome is a histone octamer containing two molecules each of H2A, H2B, H3 and H4 assembled in one H3-H4 heterotetramer and two H2A-H2B heterodimers. The octamer wraps approximately 147 bp of DNA. Post-translationally, acetylation is generally linked to gene activation. Can be acetylated to form H3K9ac, H3K14ac, H3K18ac and H3K23ac. H3K9ac could compete with H3K9me and prevent gene silencing. H3K9ac is restricted to euchromatin. Methylated to form mainly H3K4me, H3K9me, H3K18me, H3K23me, H3K27me and H3K36me. H3K4me1/2/3, H3K9me3, H3K27me3 and H3K36me1/2/3 are typical marks for euchromatin, whereas heterochromatic chromocenters are enriched in H3K9me1/2 and H3K27me1/2. H2BK143ub1 is probably prerequisite for H3K4me. In terms of processing, can be phosphorylated to form H3S10ph, H3T11ph and H3S28ph.

The protein localises to the nucleus. Its subcellular location is the chromosome. Functionally, core component of nucleosome. Nucleosomes wrap and compact DNA into chromatin, limiting DNA accessibility to the cellular machineries which require DNA as a template. Histones thereby play a central role in transcription regulation, DNA repair, DNA replication and chromosomal stability. DNA accessibility is regulated via a complex set of post-translational modifications of histones, also called histone code, and nucleosome remodeling. The protein is Histone H3.2 of Brassica napus (Rape).